The following is a 356-amino-acid chain: Phospho-N-acetylmuramoyl-pentapeptide-transferase (356 aa).

The next 10 helical transmembrane spans lie at 25–45 (TVAA…SIIA), 70–90 (GTPT…AFLW), 93–113 (LSNI…MIGF), 138–158 (FLIA…GLAL), 164–184 (YFIN…VGTG), 195–215 (GLAI…AYLS), 235–255 (LAVL…FNAP), 258–278 (AIFM…IVAV), 284–304 (IVLA…VIQV), and 333–353 (QVVI…LSTL).

It belongs to the glycosyltransferase 4 family. MraY subfamily. Mg(2+) serves as cofactor.

Its subcellular location is the cell inner membrane. The catalysed reaction is UDP-N-acetyl-alpha-D-muramoyl-L-alanyl-gamma-D-glutamyl-meso-2,6-diaminopimeloyl-D-alanyl-D-alanine + di-trans,octa-cis-undecaprenyl phosphate = di-trans,octa-cis-undecaprenyl diphospho-N-acetyl-alpha-D-muramoyl-L-alanyl-D-glutamyl-meso-2,6-diaminopimeloyl-D-alanyl-D-alanine + UMP. The protein operates within cell wall biogenesis; peptidoglycan biosynthesis. In terms of biological role, catalyzes the initial step of the lipid cycle reactions in the biosynthesis of the cell wall peptidoglycan: transfers peptidoglycan precursor phospho-MurNAc-pentapeptide from UDP-MurNAc-pentapeptide onto the lipid carrier undecaprenyl phosphate, yielding undecaprenyl-pyrophosphoryl-MurNAc-pentapeptide, known as lipid I. In Bartonella quintana (strain Toulouse) (Rochalimaea quintana), this protein is Phospho-N-acetylmuramoyl-pentapeptide-transferase.